A 419-amino-acid polypeptide reads, in one-letter code: Serine hydroxymethyltransferase (419 aa).

(6S)-5,6,7,8-tetrahydrofolate contacts are provided by residues leucine 121 and 125 to 127; that span reads GHL. Lysine 230 bears the N6-(pyridoxal phosphate)lysine mark. 355 to 357 lines the (6S)-5,6,7,8-tetrahydrofolate pocket; that stretch reads SPF.

Belongs to the SHMT family. Homodimer. Pyridoxal 5'-phosphate is required as a cofactor.

Its subcellular location is the cytoplasm. It catalyses the reaction (6R)-5,10-methylene-5,6,7,8-tetrahydrofolate + glycine + H2O = (6S)-5,6,7,8-tetrahydrofolate + L-serine. The protein operates within one-carbon metabolism; tetrahydrofolate interconversion. Its pathway is amino-acid biosynthesis; glycine biosynthesis; glycine from L-serine: step 1/1. Its function is as follows. Catalyzes the reversible interconversion of serine and glycine with tetrahydrofolate (THF) serving as the one-carbon carrier. This reaction serves as the major source of one-carbon groups required for the biosynthesis of purines, thymidylate, methionine, and other important biomolecules. Also exhibits THF-independent aldolase activity toward beta-hydroxyamino acids, producing glycine and aldehydes, via a retro-aldol mechanism. The chain is Serine hydroxymethyltransferase from Streptococcus equi subsp. zooepidemicus (strain H70).